Here is a 707-residue protein sequence, read N- to C-terminus: Ribosomal RNA large subunit methyltransferase K/L (707 aa).

In terms of domain architecture, THUMP spans 43–154; that stretch reads QIYRCCLWSR…KDKAILGVDM (112 aa).

This sequence belongs to the methyltransferase superfamily. RlmKL family.

It is found in the cytoplasm. The catalysed reaction is guanosine(2445) in 23S rRNA + S-adenosyl-L-methionine = N(2)-methylguanosine(2445) in 23S rRNA + S-adenosyl-L-homocysteine + H(+). The enzyme catalyses guanosine(2069) in 23S rRNA + S-adenosyl-L-methionine = N(2)-methylguanosine(2069) in 23S rRNA + S-adenosyl-L-homocysteine + H(+). Specifically methylates the guanine in position 2445 (m2G2445) and the guanine in position 2069 (m7G2069) of 23S rRNA. The chain is Ribosomal RNA large subunit methyltransferase K/L from Vibrio parahaemolyticus serotype O3:K6 (strain RIMD 2210633).